The primary structure comprises 261 residues: Neurovirulence factor ICP34.5 (261 aa).

Over residues 1–17 (MSRRRGPRRRGPRRRPR) the composition is skewed to basic residues. The interval 1-19 (MSRRRGPRRRGPRRRPRPG) is required for nucleolar localization. Disordered regions lie at residues 1-59 (MSRR…SAPA), 75-135 (DSDD…LALR), and 145-164 (RLSLRRRRPPASPPADAPRG). Repeats lie at residues 3-7 (RRRGP), 8-12 (RRRGP), 16-23 (PRPGAPAV), and 24-31 (PRPGAPAV). A 2 X 5 AA tandem repeats of R-R-R-G-P region spans residues 3-12 (RRRGPRRRGP). A 2 X 8 AA tandem repeats of P-R-P-G-A-P-A-V region spans residues 16–31 (PRPGAPAVPRPGAPAV). A compositionally biased stretch (pro residues) spans 18–32 (PGAPAVPRPGAPAVP). The span at 75 to 88 (DSDDADYAGNDDAE) shows a compositional bias: acidic residues. Low complexity predominate over residues 101–111 (APEAPHAAPAA). A Nuclear export signal motif is present at residues 128–137 (LPPHLALRLR). Residues 163–176 (RGKVCFSPRVQVRH) are binding to PP1CA. The segment at 163–176 (RGKVCFSPRVQVRH) is interaction with host PPP1CA. The segment at 178-261 (VAWETAARLA…AAAGPGRRAV (84 aa)) is important for interferon resistance. Residues 188–206 (RRGSWARERADRDRFRRRV) carry the Bipartite nuclear localization signal motif. The tract at residues 206 to 221 (VAAAEAVIGPCLEPEA) is interaction with host EIF2S1/EIF-2ALPHA. The interval 223 to 261 (ARARARARAHEDGGPAEEEEAAAAARGSSAAAGPGRRAV) is disordered. Positions 244 to 261 (AAAARGSSAAAGPGRRAV) are enriched in low complexity.

The protein belongs to the PPP1R15 family. In terms of assembly, interacts with host PPP1CA to form a high-molecular-weight complex that dephosphorylates EIF2S1/eIF-2alpha. Interacts with host EIF2S1/eIF-2alpha; this interaction is crucial for the specific dephosphorylation of EIF2S1/eIF-2alpha by PPP1CA.

The protein localises to the host cytoplasm. It localises to the host nucleus. The protein resides in the host nucleolus. It is found in the virion. Functionally, plays essential roles in viral nuclear egress to mediate capsid transit across the nuclear membrane and also in the inhibition of host immune response and integrated stress response (ISR). Facilitates nuclear egress cooperatively with host C1QBP and protein kinase C/PKC to induce lamin A/C phosphorylation and subsequent reorganization. In turn, lamina disassembles and nuclear egress occurs. Recruits the serine/threonine-protein phosphatase PPP1CA/PP1-alpha to dephosphorylate the translation initiation factor EIF2S1/eIF-2alpha, thereby couteracting the host shutoff of protein synthesis involving double-stranded RNA-dependent protein kinase EIF2AK2/PKR. Also down-modulates the host MHC class II proteins cell surface expression. Acts as a neurovirulence factor that has a profound effect on the growth of the virus in central nervous system tissue, probably through its ability to maintain an environment favorable for viral replication. The chain is Neurovirulence factor ICP34.5 (RL1) from Human herpesvirus 2 (strain HG52) (HHV-2).